The following is a 1421-amino-acid chain: ALK tyrosine kinase receptor homolog scd-2 (1421 aa).

The signal sequence occupies residues 1–20 (MRKRRLWWFVVLFRVTLVGA). Over 21–903 (ILPNETFDVR…DTCEEIQIWT (883 aa)) the chain is Extracellular. N-linked (GlcNAc...) asparagine glycans are attached at residues N24, N44, N70, N83, N119, and N201. The LDL-receptor class A domain occupies 300–338 (QCSRGDQFLCSISANTRCLQNAQCDSRIDCDDESDEMDC). Intrachain disulfides connect C301-C317, C309-C329, and C323-C338. Residues 339-542 (GNINGTMCDF…NLSFSPTCFE (204 aa)) form the MAM domain. 11 N-linked (GlcNAc...) asparagine glycosylation sites follow: N342, N362, N495, N533, N546, N633, N726, N793, N849, N873, and N893. The helical transmembrane segment at 904-924 (LYNITFLIFAALTIIGALFVV) threads the bilayer. Residues 925-1421 (YHYRNREKQM…SVPLLECQTR (497 aa)) are Cytoplasmic-facing. A Protein kinase domain is found at 976-1261 (IERGRVLGRG…GMPFPIHPAV (286 aa)). ATP contacts are provided by residues 982–990 (LGRGNFGEV) and K1003. D1106 functions as the Proton acceptor in the catalytic mechanism.

The protein belongs to the protein kinase superfamily. Tyr protein kinase family. Insulin receptor subfamily. Interacts (via cytoplasmic domain) with fsn-1 (via SPRY domain). Expressed in AIA sensory neurons.

The protein resides in the cell membrane. It carries out the reaction L-tyrosyl-[protein] + ATP = O-phospho-L-tyrosyl-[protein] + ADP + H(+). Probable tyrosine-protein kinase receptor which regulates the dauer/non-dauer developmental decision probably by controlling daf-3 transcriptional activity in parallel or together with the TGF-beta pathway. Regulates integration of conflicting sensory cues in AIA interneurons. May act as a receptor for hen-1. In AWA neurons, together with hen-1, plays a role in regulating olfactory adaptation by controlling the forgetting sensory responses to odorants such as diacetyl. The sequence is that of ALK tyrosine kinase receptor homolog scd-2 from Caenorhabditis elegans.